The primary structure comprises 550 residues: Dihydroxy-acid dehydratase (550 aa).

Residue Asp-78 participates in Mg(2+) binding. Cys-119 lines the [2Fe-2S] cluster pocket. Mg(2+) contacts are provided by Asp-120 and Lys-121. At Lys-121 the chain carries N6-carboxylysine. A [2Fe-2S] cluster-binding site is contributed by Cys-192. Glu-440 lines the Mg(2+) pocket. Ser-466 acts as the Proton acceptor in catalysis.

The protein belongs to the IlvD/Edd family. In terms of assembly, homodimer. [2Fe-2S] cluster serves as cofactor. The cofactor is Mg(2+).

It catalyses the reaction (2R)-2,3-dihydroxy-3-methylbutanoate = 3-methyl-2-oxobutanoate + H2O. It carries out the reaction (2R,3R)-2,3-dihydroxy-3-methylpentanoate = (S)-3-methyl-2-oxopentanoate + H2O. Its pathway is amino-acid biosynthesis; L-isoleucine biosynthesis; L-isoleucine from 2-oxobutanoate: step 3/4. The protein operates within amino-acid biosynthesis; L-valine biosynthesis; L-valine from pyruvate: step 3/4. Its function is as follows. Functions in the biosynthesis of branched-chain amino acids. Catalyzes the dehydration of (2R,3R)-2,3-dihydroxy-3-methylpentanoate (2,3-dihydroxy-3-methylvalerate) into 2-oxo-3-methylpentanoate (2-oxo-3-methylvalerate) and of (2R)-2,3-dihydroxy-3-methylbutanoate (2,3-dihydroxyisovalerate) into 2-oxo-3-methylbutanoate (2-oxoisovalerate), the penultimate precursor to L-isoleucine and L-valine, respectively. This is Dihydroxy-acid dehydratase from Thermodesulfovibrio yellowstonii (strain ATCC 51303 / DSM 11347 / YP87).